The chain runs to 621 residues: Archaeal Lon protease (621 aa).

Topologically, residues Met-1–Gln-117 are cytoplasmic. Gly-54 to Ser-61 serves as a coordination point for ATP. Residues Ala-118 to Leu-136 form a helical membrane-spanning segment. The Extracellular segment spans residues Thr-137–Asn-141. A helical membrane pass occupies residues Leu-142–Ile-160. Over Pro-161–Val-621 the chain is Cytoplasmic. The region spanning Gly-423–Asp-602 is the Lon proteolytic domain. Catalysis depends on residues Ser-509 and Lys-552.

The protein belongs to the peptidase S16 family. Archaeal LonB subfamily. As to quaternary structure, homohexamer. Organized in a ring with a central cavity.

The protein localises to the cell membrane. Its function is as follows. ATP-dependent serine protease that mediates the selective degradation of mutant and abnormal proteins as well as certain short-lived regulatory proteins. Degrades polypeptides processively. The sequence is that of Archaeal Lon protease from Archaeoglobus fulgidus (strain ATCC 49558 / DSM 4304 / JCM 9628 / NBRC 100126 / VC-16).